We begin with the raw amino-acid sequence, 398 residues long: Acetate kinase (398 aa).

Asn-9 contacts Mg(2+). An ATP-binding site is contributed by Lys-16. Arg-90 contributes to the substrate binding site. Catalysis depends on Asp-147, which acts as the Proton donor/acceptor. ATP is bound by residues 207-211 (HIGNG), 282-284 (DLR), and 330-334 (GVGEN). Residue Glu-384 coordinates Mg(2+).

Belongs to the acetokinase family. In terms of assembly, homodimer. It depends on Mg(2+) as a cofactor. Mn(2+) serves as cofactor.

The protein localises to the cytoplasm. It carries out the reaction acetate + ATP = acetyl phosphate + ADP. It functions in the pathway metabolic intermediate biosynthesis; acetyl-CoA biosynthesis; acetyl-CoA from acetate: step 1/2. Functionally, catalyzes the formation of acetyl phosphate from acetate and ATP. Can also catalyze the reverse reaction. This is Acetate kinase from Staphylococcus carnosus (strain TM300).